Consider the following 481-residue polypeptide: Proline--tRNA ligase (481 aa).

Belongs to the class-II aminoacyl-tRNA synthetase family. ProS type 3 subfamily. In terms of assembly, homodimer.

The protein localises to the cytoplasm. The catalysed reaction is tRNA(Pro) + L-proline + ATP = L-prolyl-tRNA(Pro) + AMP + diphosphate. Catalyzes the attachment of proline to tRNA(Pro) in a two-step reaction: proline is first activated by ATP to form Pro-AMP and then transferred to the acceptor end of tRNA(Pro). This is Proline--tRNA ligase from Chlorobium chlorochromatii (strain CaD3).